The primary structure comprises 394 residues: Xylose isomerase (394 aa).

Residues His54 and Asp57 contribute to the active site. Residues Glu180, Glu216, His219, Asp244, Asp254, Asp256, and Asp285 each contribute to the Mg(2+) site. The segment at 370 to 394 (VRTPRPAGDGPPAGRARLTVAPRKR) is disordered. A compositionally biased stretch (low complexity) spans 373–386 (PRPAGDGPPAGRAR).

The protein belongs to the xylose isomerase family. As to quaternary structure, homotetramer. Requires Mg(2+) as cofactor.

It localises to the cytoplasm. It catalyses the reaction alpha-D-xylose = alpha-D-xylulofuranose. Functionally, involved in D-xylose catabolism. This chain is Xylose isomerase (xylA), found in Streptomyces rochei (Streptomyces parvullus).